The sequence spans 210 residues: C4-dicarboxylate TRAP transporter small permease protein DctQ (210 aa).

Helical transmembrane passes span 13–33 (EGLI…YVVL), 77–97 (ALFA…AGHL), 113–133 (VLGV…CVAS), and 160–180 (IGLI…EILV).

It belongs to the TRAP transporter small permease family. As to quaternary structure, the complex comprises the extracytoplasmic solute receptor protein DctP, and the two transmembrane proteins DctQ and DctM.

It localises to the cell inner membrane. Its function is as follows. Part of the tripartite ATP-independent periplasmic (TRAP) transport system DctPQM involved in C4-dicarboxylates uptake. The chain is C4-dicarboxylate TRAP transporter small permease protein DctQ from Pseudomonas aeruginosa (strain ATCC 15692 / DSM 22644 / CIP 104116 / JCM 14847 / LMG 12228 / 1C / PRS 101 / PAO1).